The following is a 224-amino-acid chain: Urease accessory protein UreF (224 aa).

Belongs to the UreF family. UreD, UreF and UreG form a complex that acts as a GTP-hydrolysis-dependent molecular chaperone, activating the urease apoprotein by helping to assemble the nickel containing metallocenter of UreC. The UreE protein probably delivers the nickel.

The protein resides in the cytoplasm. Functionally, required for maturation of urease via the functional incorporation of the urease nickel metallocenter. In Pseudomonas fluorescens (strain Pf0-1), this protein is Urease accessory protein UreF.